The chain runs to 172 residues: ATP synthase subunit b (172 aa).

The chain crosses the membrane as a helical span at residues 27 to 47 (LAIVIFGLYKFLPPFVGGILE).

This sequence belongs to the ATPase B chain family. F-type ATPases have 2 components, F(1) - the catalytic core - and F(0) - the membrane proton channel. F(1) has five subunits: alpha(3), beta(3), gamma(1), delta(1), epsilon(1). F(0) has four main subunits: a(1), b(1), b'(1) and c(10-14). The alpha and beta chains form an alternating ring which encloses part of the gamma chain. F(1) is attached to F(0) by a central stalk formed by the gamma and epsilon chains, while a peripheral stalk is formed by the delta, b and b' chains.

The protein resides in the cellular thylakoid membrane. Functionally, f(1)F(0) ATP synthase produces ATP from ADP in the presence of a proton or sodium gradient. F-type ATPases consist of two structural domains, F(1) containing the extramembraneous catalytic core and F(0) containing the membrane proton channel, linked together by a central stalk and a peripheral stalk. During catalysis, ATP synthesis in the catalytic domain of F(1) is coupled via a rotary mechanism of the central stalk subunits to proton translocation. Component of the F(0) channel, it forms part of the peripheral stalk, linking F(1) to F(0). The sequence is that of ATP synthase subunit b from Prochlorococcus marinus (strain MIT 9303).